Consider the following 336-residue polypeptide: tRNA N6-adenosine threonylcarbamoyltransferase (336 aa).

Fe cation is bound by residues histidine 108 and histidine 112. Substrate is bound by residues 129–133 (LISGG), aspartate 161, glutamate 178, and serine 258. Aspartate 286 provides a ligand contact to Fe cation.

Belongs to the KAE1 / TsaD family. Requires Fe(2+) as cofactor.

It localises to the cytoplasm. The enzyme catalyses L-threonylcarbamoyladenylate + adenosine(37) in tRNA = N(6)-L-threonylcarbamoyladenosine(37) in tRNA + AMP + H(+). In terms of biological role, required for the formation of a threonylcarbamoyl group on adenosine at position 37 (t(6)A37) in tRNAs that read codons beginning with adenine. Is probably involved in the transfer of the threonylcarbamoyl moiety of threonylcarbamoyl-AMP (TC-AMP) to the N6 group of A37. This Pyrobaculum neutrophilum (strain DSM 2338 / JCM 9278 / NBRC 100436 / V24Sta) (Thermoproteus neutrophilus) protein is tRNA N6-adenosine threonylcarbamoyltransferase.